The following is a 205-amino-acid chain: Ribosomal RNA small subunit methyltransferase G (205 aa).

S-adenosyl-L-methionine is bound by residues G66, F71, 119-120 (IE), and R135.

This sequence belongs to the methyltransferase superfamily. RNA methyltransferase RsmG family.

It is found in the cytoplasm. The catalysed reaction is guanosine(527) in 16S rRNA + S-adenosyl-L-methionine = N(7)-methylguanosine(527) in 16S rRNA + S-adenosyl-L-homocysteine. Specifically methylates the N7 position of guanine in position 527 of 16S rRNA. This is Ribosomal RNA small subunit methyltransferase G from Rhizobium leguminosarum bv. trifolii (strain WSM2304).